A 234-amino-acid chain; its full sequence is Probable septum site-determining protein MinC (234 aa).

It belongs to the MinC family. Interacts with MinD and FtsZ.

Cell division inhibitor that blocks the formation of polar Z ring septums. Rapidly oscillates between the poles of the cell to destabilize FtsZ filaments that have formed before they mature into polar Z rings. Prevents FtsZ polymerization. In Buchnera aphidicola subsp. Baizongia pistaciae (strain Bp), this protein is Probable septum site-determining protein MinC.